A 492-amino-acid chain; its full sequence is Adenosylhomocysteinase (492 aa).

Residues Thr68, Asp153, and Glu215 each contribute to the substrate site. 216–218 (TTT) lines the NAD(+) pocket. Residues Lys245 and Asp249 each contribute to the substrate site. NAD(+)-binding positions include Asn250, 279 to 284 (GYGDVG), Glu302, Asn337, 358 to 360 (IGH), and Asn406.

The protein belongs to the adenosylhomocysteinase family. Requires NAD(+) as cofactor.

Its subcellular location is the cytoplasm. It catalyses the reaction S-adenosyl-L-homocysteine + H2O = L-homocysteine + adenosine. It functions in the pathway amino-acid biosynthesis; L-homocysteine biosynthesis; L-homocysteine from S-adenosyl-L-homocysteine: step 1/1. Its function is as follows. May play a key role in the regulation of the intracellular concentration of adenosylhomocysteine. The sequence is that of Adenosylhomocysteinase from Mycobacterium leprae (strain Br4923).